Reading from the N-terminus, the 120-residue chain is UPF0295 protein Exig_0660 (120 aa).

Transmembrane regions (helical) follow at residues 16–36 and 41–61; these read AMFL…LKQF and VILM…YFLI.

It belongs to the UPF0295 family.

Its subcellular location is the cell membrane. The chain is UPF0295 protein Exig_0660 from Exiguobacterium sibiricum (strain DSM 17290 / CCUG 55495 / CIP 109462 / JCM 13490 / 255-15).